A 603-amino-acid polypeptide reads, in one-letter code: Probable L-gulonolactone oxidase 6 (603 aa).

Positions 1 to 35 are cleaved as a signal peptide; it reads MAFTSSPSYGSLNAAFWRTIFVVHCISTLVFTTIS. In terms of domain architecture, FAD-binding PCMH-type spans 64–246; that stretch reads STCRAANVAY…SQVTLKLQPM (183 aa).

This sequence belongs to the oxygen-dependent FAD-linked oxidoreductase family. FAD is required as a cofactor.

It catalyses the reaction L-gulono-1,4-lactone + O2 = L-ascorbate + H2O2 + H(+). The protein operates within cofactor biosynthesis; L-ascorbate biosynthesis. Its function is as follows. May be involved in the biosynthesis of ascorbic acid. In Arabidopsis thaliana (Mouse-ear cress), this protein is Probable L-gulonolactone oxidase 6.